Here is a 578-residue protein sequence, read N- to C-terminus: Forkhead box protein P1 (578 aa).

The C2H2-type zinc-finger motif lies at 208–233 (GVCKWPGCETICEDFPSFLKHLNSEH). The segment at 250–271 (VQQLELQLSKDKERLQAMMSHL) is leucine-zipper. Residues 284–288 (PLNLV) are ctbp1-binding. Positions 293–305 (LSKTASEASPQSL) are enriched in polar residues. The disordered stretch occupies residues 293–325 (LSKTASEASPQSLPHTPTTPTAPLTPITQGPSV). The span at 306-320 (PHTPTTPTAPLTPIT) shows a compositional bias: low complexity. The segment at residues 366-456 (RPPFTYASLI…PQKISGSPTL (91 aa)) is a DNA-binding region (fork-head). Residues 511 to 578 (MEHTSSNGSD…EDDPVNDDME (68 aa)) form a disordered region. Residues 515–527 (SSNGSDSSPGRSP) are compositionally biased toward low complexity. Over residues 568 to 578 (YEDDPVNDDME) the composition is skewed to acidic residues.

In terms of assembly, dimerization is required for DNA-binding. Isoform a, but not isoform b, interacts with ctbp1. As to expression, all isoforms show similar spatial expression. Localized to the animal hemisphere of early cleavage stage embryos. At tailbud stages, expressed in regions of the brain, eye and the splanchnic mesodermal layer of the lateral plate mesoderm surrounding the gut. At stage 35, expressed within the lens of the eye, in distinct regions of the head mesenchyme and in the area anterior to the gut. In the brain the anterior-most expression is restricted to the outer region of the mesencephalon. With ongoing development, additional expression is found in the curling gut.

It is found in the nucleus. Transcriptional repressor. The chain is Forkhead box protein P1 from Xenopus laevis (African clawed frog).